Consider the following 176-residue polypeptide: 3-hydroxydecanoyl-[acyl-carrier-protein] dehydratase (176 aa).

Residue His-75 is part of the active site.

This sequence belongs to the thioester dehydratase family. FabA subfamily. Homodimer.

The protein resides in the cytoplasm. The enzyme catalyses a (3R)-hydroxyacyl-[ACP] = a (2E)-enoyl-[ACP] + H2O. The catalysed reaction is (3R)-hydroxydecanoyl-[ACP] = (2E)-decenoyl-[ACP] + H2O. It carries out the reaction (2E)-decenoyl-[ACP] = (3Z)-decenoyl-[ACP]. The protein operates within lipid metabolism; fatty acid biosynthesis. Its function is as follows. Necessary for the introduction of cis unsaturation into fatty acids. Catalyzes the dehydration of (3R)-3-hydroxydecanoyl-ACP to E-(2)-decenoyl-ACP and then its isomerization to Z-(3)-decenoyl-ACP. Can catalyze the dehydratase reaction for beta-hydroxyacyl-ACPs with saturated chain lengths up to 16:0, being most active on intermediate chain length. This chain is 3-hydroxydecanoyl-[acyl-carrier-protein] dehydratase, found in Glaesserella parasuis serovar 5 (strain SH0165) (Haemophilus parasuis).